Consider the following 391-residue polypeptide: Alanine racemase, biosynthetic (391 aa).

The active-site Proton acceptor; specific for D-alanine is the lysine 52. Lysine 52 bears the N6-(pyridoxal phosphate)lysine mark. Arginine 149 lines the substrate pocket. Catalysis depends on tyrosine 271, which acts as the Proton acceptor; specific for L-alanine. A substrate-binding site is contributed by methionine 330.

This sequence belongs to the alanine racemase family. Requires pyridoxal 5'-phosphate as cofactor.

The enzyme catalyses L-alanine = D-alanine. The protein operates within amino-acid biosynthesis; D-alanine biosynthesis; D-alanine from L-alanine: step 1/1. Its pathway is cell wall biogenesis; peptidoglycan biosynthesis. Functionally, catalyzes the interconversion of L-alanine and D-alanine. Provides the D-alanine required for cell wall biosynthesis. In Agrobacterium fabrum (strain C58 / ATCC 33970) (Agrobacterium tumefaciens (strain C58)), this protein is Alanine racemase, biosynthetic (alr).